The chain runs to 2274 residues: MGVPKRKASEGPSSAASPAGTVKRTRAEEFTGVRFKTLLKDAQGPGPALEAFVSAAKKLPQEDMCDVVEGYIKISMECAEIFQLLSGEKRPESEMLLIFQAFEAILLRTASDLTHFHVVGANIVKKLLYNHMKLLCESLYASGYRMARACLDLMTAMVTQGPEAARDVCSSLDLNKKALFALVTKRDSKGVHDVRLAYIQFALSFLIAGDDNTIGQVLEIKEFIPCIFSSGIKEDKISTINILLSTLKTKVIHNKNITKTQKVRFFTGQFLNHIAALYNWNGITDVTPEKPEISAEEAGKAMVRDLVHNFLMDLCCSRKHGISFYDASLGTSGRGGNLTLLHFLLSLKTAAGDDLVASLVVSILKVCPDLLTKYFKEVTFSFLPRVKSTWLNNVKLLNKIYEAQPEISPAFWTREFIPLPRLLAMVMVTTVPLVCNKIMFTQALNLDSIPVKHSALSLISDILKRALKTVDHCLDKETWQDSDVYTAEMMEEFVQLFREALGKILPDLNTVIWVWQSFKKQEIKEDHEKGKKSSSKTPAVSKAAQHDVAETILLKSVLLQVICLYQQVVPHVIMQYNFDFSKLLKGIISEQGPSQEVPPILQHHMLKVALELPANKFLWLKAQEGPEAEIIGGERSVFYLLMKMFVNSNHLQLKSSTKLLIMKILRDTGVFEHTWRELELWLEHLDSTAEERKEAVIQFLERILLTLVMNPYSYTDKASEFVQEASTLQASMGKQDADDVSIPISHIDDVLDMVDVLVEGSEGLDEDIGFLLNEDMILLTFPFSALVPAALEARNKLLLGTDCEAGESIMAYMTAVLTDLLHTQRDPLALCLLLQSYDKFEPVSLLCGQQLAQFHRYYSLWIPAQAQEALPLQVSSSSGPCTLPPSSCFSTLLQTAYESQTLGDKSVQAQLLAAVPSLALQHMLRSAKQVLLYLKSTVENFSQLGRSVGPALLQSLLGLLKQLVIHAERLDAQNQQKLEAARAESDLFLDMESVASLELATDKTIEELLLAILKHPTLETWFLALEQKALPPHTLSPILVKLLAAHFSAGVLQLLVASSPILHKLGQLGLLAKYSEAITQSVLIELRTRTLNSTSTPKTLPQLEALRELHPYMEGVQIREVTLALLALPEAHLLTQQGTQSLGKERHLSSLGKTLVQLLASSHQDQLQSSELLWCAEYVRGLGALLPTLAEHELDTVFLQTLQKDPVLAPVVPEGVLEYCLARRTQTALGIASLLLQYSGTHLVKFELWCGQPGVGPTLQEHLDDFFPLIHVYLQHRAQGSFMRPTGVSSAVTPVLKALWRQVRDRFFHITGPSKDALHLEALAQLIPFARTKDLHVLMDHLPNTLRTLSNHKSWTLADSVSAALAESAEELGSWRKTLLRSCIQWLAVSFSGREPEDENTQEHEKAMLVRLSELLHAVKEVDPGDWQQFVKTGLKFRYHDLTFLKTLLSATKLLYGPESSGRTKLVQLSVVHMMLTQHSLFLPTMLSSEEEETPDSGVKETLLDLMSTVVRLCPSVCQSSHFAVLLGTYSATLSVLDQKILLLLRAYEQNNLSLISFRVLLWGPAAVEHHKTCRSLGKSLWQQPSVGDILRLLDPDRMMQTILHFPQYRKLLPTEDTGEPLVFKDKTARVDLDSLYDPCFLLHLFGELTRPEFVVDCRKFLDSNALGLTVAALSSYDPQMRAAAYYVLAAYYSHLEGARFREQSQVLYLLDVVRNGIRTPNLRLPFTVALFIAKAAVQILKPEEHMYWKISKFLLSHENLNMDKLPGFYQFFYSSDFQQKTEQEWVLEILRQGIRDKHCYELCSRRGVFHIILSFFNSPLCDEVAQNWILEILQNVAHITRSAYEVIRDYSLLTWVLHILESRFVETQLLSNVISLLHTLWVTNLGNKAPEERSQPPGQVGSQESEKMLALHMVSEFLYVLIALTKHLRPTLASAQLMNFFWTLESVLSYRATIIKLFKDMGRFTVNKVALSTKDVLILLHKWSLIERDTKLQGELKAVIEQHQAKDLMKMLKDKSRPVVAAQARGPRGRKRRHGGLEETAEPQLEASCLEKCKDLLRATLTHWGPGDPLPGPTQGSVGQTIPKSKTLSSAHAAVSLVASWVLRSLAERPVSRAEVTRLLDWLKSHILPQPMVVADLLGDSAVKTGIFKLYNHHCSAQGLVGPAQDVACKFSTVMLQLLVAQGRKESPFHSVAEALCLDSLNEKEEAKRAPAAFLVSLYVKDMWLGAQQPDTFLAHIRMVCEAAKDVPLDEPEAIVVLCRNVDSSAQCLTRSR.

The tract at residues 1–23 is disordered; it reads MGVPKRKASEGPSSAASPAGTVK. Residues 10 to 20 show a composition bias toward low complexity; it reads EGPSSAASPAG. A phosphoserine mark is found at S17 and S1141. Residues 2020 to 2042 form a disordered region; that stretch reads VVAAQARGPRGRKRRHGGLEETA.

It is found in the nucleus. The protein localises to the nucleolus. The sequence is that of Nucleolar pre-ribosomal-associated protein 1 (Urb1) from Mus musculus (Mouse).